We begin with the raw amino-acid sequence, 337 residues long: MTQPTARSIPLQVVSGDTAAPAPLQTGVKQIGGDKIHRSPVQFVDAPVLRKPSWIRVRIPSGNAVQNLKAKLRENRLVTVCEEASCPNIHECFSHGTATFMILGEVCTRRCSFCDVAHGRPKPPDANEPASLAITVADMGLKYVVVTSVDRDDLRDGGAQHFVDCISAIRTSSPNTRIEILTPDFRGKGRMDRALDILALSPPDVFNHNIETVPDLYPNVRPGADYQWSLTLLQRFKAQHPSIATKSGIMLGLGETMEQVQATLRDLRAHDVDMITIGQYLQPTPHHHPVMRYWTPEEYKALEEYGNALGFSHVASGPMVRSSYHADRQAAGAGVAA.

[4Fe-4S] cluster is bound by residues cysteine 81, cysteine 86, cysteine 92, cysteine 107, cysteine 111, cysteine 114, and serine 323. The Radical SAM core domain maps to 93–312; sequence FSHGTATFMI…EEYGNALGFS (220 aa).

This sequence belongs to the radical SAM superfamily. Lipoyl synthase family. [4Fe-4S] cluster serves as cofactor.

It localises to the cytoplasm. The enzyme catalyses [[Fe-S] cluster scaffold protein carrying a second [4Fe-4S](2+) cluster] + N(6)-octanoyl-L-lysyl-[protein] + 2 oxidized [2Fe-2S]-[ferredoxin] + 2 S-adenosyl-L-methionine + 4 H(+) = [[Fe-S] cluster scaffold protein] + N(6)-[(R)-dihydrolipoyl]-L-lysyl-[protein] + 4 Fe(3+) + 2 hydrogen sulfide + 2 5'-deoxyadenosine + 2 L-methionine + 2 reduced [2Fe-2S]-[ferredoxin]. It participates in protein modification; protein lipoylation via endogenous pathway; protein N(6)-(lipoyl)lysine from octanoyl-[acyl-carrier-protein]: step 2/2. Its function is as follows. Catalyzes the radical-mediated insertion of two sulfur atoms into the C-6 and C-8 positions of the octanoyl moiety bound to the lipoyl domains of lipoate-dependent enzymes, thereby converting the octanoylated domains into lipoylated derivatives. This chain is Lipoyl synthase, found in Xanthomonas oryzae pv. oryzae (strain MAFF 311018).